The chain runs to 1108 residues: Isoleucine--tRNA ligase (1108 aa).

A 'HIGH' region motif is present at residues Pro-53–His-63. Residues Lys-654–Arg-658 carry the 'KMSKS' region motif. Residue Lys-657 participates in ATP binding.

This sequence belongs to the class-I aminoacyl-tRNA synthetase family. IleS type 2 subfamily. In terms of assembly, monomer. The cofactor is Zn(2+).

The protein resides in the cytoplasm. It carries out the reaction tRNA(Ile) + L-isoleucine + ATP = L-isoleucyl-tRNA(Ile) + AMP + diphosphate. In terms of biological role, catalyzes the attachment of isoleucine to tRNA(Ile). As IleRS can inadvertently accommodate and process structurally similar amino acids such as valine, to avoid such errors it has two additional distinct tRNA(Ile)-dependent editing activities. One activity is designated as 'pretransfer' editing and involves the hydrolysis of activated Val-AMP. The other activity is designated 'posttransfer' editing and involves deacylation of mischarged Val-tRNA(Ile). The protein is Isoleucine--tRNA ligase of Rickettsia bellii (strain RML369-C).